The sequence spans 293 residues: PHD finger protein 11A (293 aa).

The C2HC pre-PHD-type zinc-finger motif lies at 25 to 61 (KRTCALCPEGHEWSQIYFSPSANIVAHENCLLYSSGL). The PHD-type; degenerate zinc finger occupies 91–143 (LKCSFCKNKGATMGYDLQSCTKNYHLSCAMEDHAILQVDEDHGTYKLFCQKHA). The segment at 262-293 (SSSTSGSLLPPEDHQVRCQESPEVQAGSGDSL) is disordered.

It is found in the nucleus. This Mus musculus (Mouse) protein is PHD finger protein 11A (Phf11a).